The chain runs to 69 residues: Small, acid-soluble spore protein I (69 aa).

The protein belongs to the SspI family.

The protein resides in the spore core. The polypeptide is Small, acid-soluble spore protein I (Bacillus anthracis (strain A0248)).